Here is a 190-residue protein sequence, read N- to C-terminus: MVRVSTSEFRVGLRVEIDGQPYVILQNDFVKPGKGQAFNRIKVKNFLTGRVIEKTFKSGESIETADVREQQMRLLYTDQEGATFMDDETFEQELIFWDKLENIRQWLLEDTVYTLVRYNGDVISVEPPIFMELSIAETAPGVRGDTASGRVLKPATTNTGAKIMVPIFIEEGEVVKVDTRTGSYESRVSK.

It belongs to the elongation factor P family.

Its subcellular location is the cytoplasm. It participates in protein biosynthesis; polypeptide chain elongation. Its function is as follows. Involved in peptide bond synthesis. Stimulates efficient translation and peptide-bond synthesis on native or reconstituted 70S ribosomes in vitro. Probably functions indirectly by altering the affinity of the ribosome for aminoacyl-tRNA, thus increasing their reactivity as acceptors for peptidyl transferase. This Chlamydia muridarum (strain MoPn / Nigg) protein is Elongation factor P 2 (efp2).